The sequence spans 332 residues: ADP-L-glycero-D-manno-heptose-6-epimerase (332 aa).

NADP(+) is bound by residues Phe-11–Ile-12, Asp-32–Asn-33, Lys-39, Lys-54, Glu-76–Ser-80, and Asn-93. The active-site Proton acceptor is the Tyr-140. Lys-144 lines the NADP(+) pocket. Residue Asn-170 coordinates substrate. Positions 171 and 179 each coordinate NADP(+). Catalysis depends on Lys-179, which acts as the Proton acceptor. Substrate contacts are provided by residues Arg-181, His-188, Phe-202–Ser-205, Arg-215, and Tyr-294.

The protein belongs to the NAD(P)-dependent epimerase/dehydratase family. HldD subfamily. As to quaternary structure, homopentamer. Requires NADP(+) as cofactor.

The catalysed reaction is ADP-D-glycero-beta-D-manno-heptose = ADP-L-glycero-beta-D-manno-heptose. It participates in nucleotide-sugar biosynthesis; ADP-L-glycero-beta-D-manno-heptose biosynthesis; ADP-L-glycero-beta-D-manno-heptose from D-glycero-beta-D-manno-heptose 7-phosphate: step 4/4. Functionally, catalyzes the interconversion between ADP-D-glycero-beta-D-manno-heptose and ADP-L-glycero-beta-D-manno-heptose via an epimerization at carbon 6 of the heptose. This Dechloromonas aromatica (strain RCB) protein is ADP-L-glycero-D-manno-heptose-6-epimerase.